The sequence spans 115 residues: Large ribosomal subunit protein bL35m (115 aa).

This sequence belongs to the bacterial ribosomal protein bL35 family.

It localises to the mitochondrion. The protein is Large ribosomal subunit protein bL35m of Saccharomyces cerevisiae (strain YJM789) (Baker's yeast).